Consider the following 410-residue polypeptide: MMCFRLSPVSGSGLVLSCLLLGAVQSYAFELNLPDSKATCLFAKWKMNFTISYETTTNKTLKTVTISEPHNVTYNGSSCGDDQGVAKIAVQFGSTVSWNVTFTKEESHYVIGSIWLVYNTSDNTTFPGAIPKGSATVISSQSIEIPLDDIFRCNSLLTFKTGNVVQNYWDIHLQAFVQNGTVSKEEFVCEEDKSVTTVRPIIHTTVPPPTTTPTPLPPKVGNYSVSNGNATCLLATMGLQLNVTEEKVPFIFNINPSTTNFTGSCHPQTAQLRLNNSQIKYLDFIFAVKSESHFYLKEVNVSMYMANGSVFSVANNNLSFWDAPLGSSYMCNKEQVVSVSRTFQINTFNLKVQPFNVTKGKYATAQDCSADEDNFLVPIAVGAALAGVLALVLLAYFIGLKRHHTGYEQF.

The first 28 residues, 1–28 (MMCFRLSPVSGSGLVLSCLLLGAVQSYA), serve as a signal peptide directing secretion. Positions 29 to 192 (FELNLPDSKA…SKEEFVCEED (164 aa)) are first lumenal domain. The Lumenal segment spans residues 29-375 (FELNLPDSKA…QDCSADEDNF (347 aa)). A disulfide bridge links C40 with C79. 17 N-linked (GlcNAc...) asparagine glycosylation sites follow: N48, N58, N71, N75, N99, N119, N123, N179, N222, N229, N242, N260, N275, N300, N307, N317, and N356. The cysteines at positions 153 and 189 are disulfide-linked. Residues 193–228 (KSVTTVRPIIHTTVPPPTTTPTPLPPKVGNYSVSNG) form a hinge region. A second lumenal domain region spans residues 229–375 (NATCLLATMG…QDCSADEDNF (147 aa)). An intrachain disulfide couples C232 to C265. A disulfide bond links C331 and C368. A helical transmembrane segment spans residues 376–399 (LVPIAVGAALAGVLALVLLAYFIG). The Cytoplasmic segment spans residues 400 to 410 (LKRHHTGYEQF). The tract at residues 401-404 (KRHH) is important for binding and subsequent lysosomal degradation of target proteins.

The protein belongs to the LAMP family. In terms of assembly, monomer. Forms large homooligomers. Interacts (via its cytoplasmic region) with HSPA8; HSPA8 mediates recruitment of proteins with a KFERQ motif to the surface of the lysosome for chaperone-mediated autophagy. Interacts with HSP90 in the lysosome lumen; this enhances LAMP2 stability. Interacts with MLLT11. Interacts with ABCB9. Interacts with FURIN. Interacts with CT55; this interaction may be important for LAMP2 protein stability. Interacts with TMEM175; inhibiting the proton channel activity of TMEM175. Forms a ternary complex with RAB7A and RUFY4 (via RUN domain); the interaction with RAB7A is mediated by RUFY4 (via RUN and coiled coil domains). In terms of processing, extensively N-glycosylated. Contains a minor proportion of O-linked glycans.

The protein localises to the lysosome membrane. It localises to the endosome membrane. Its subcellular location is the cell membrane. It is found in the cytoplasmic vesicle. The protein resides in the autophagosome membrane. Lysosomal membrane glycoprotein which plays an important role in lysosome biogenesis, lysosomal pH regulation and autophagy. Acts as an important regulator of lysosomal lumen pH regulation by acting as a direct inhibitor of the proton channel TMEM175, facilitating lysosomal acidification for optimal hydrolase activity. Plays an important role in chaperone-mediated autophagy, a process that mediates lysosomal degradation of proteins in response to various stresses and as part of the normal turnover of proteins with a long biological half-live. Functions by binding target proteins, such as GAPDH, NLRP3 and MLLT11, and targeting them for lysosomal degradation. In the chaperone-mediated autophagy, acts downstream of chaperones, such as HSPA8/HSC70, which recognize and bind substrate proteins and mediate their recruitment to lysosomes, where target proteins bind LAMP2. Plays a role in lysosomal protein degradation in response to starvation. Required for the fusion of autophagosomes with lysosomes during autophagy. Cells that lack LAMP2 express normal levels of VAMP8, but fail to accumulate STX17 on autophagosomes, which is the most likely explanation for the lack of fusion between autophagosomes and lysosomes. Required for normal degradation of the contents of autophagosomes. Required for efficient MHC class II-mediated presentation of exogenous antigens via its function in lysosomal protein degradation; antigenic peptides generated by proteases in the endosomal/lysosomal compartment are captured by nascent MHC II subunits. Is not required for efficient MHC class II-mediated presentation of endogenous antigens. In Cricetulus griseus (Chinese hamster), this protein is Lysosome-associated membrane glycoprotein 2 (LAMP2).